The sequence spans 194 residues: Peptidyl-tRNA hydrolase (194 aa).

Tyrosine 17 is a binding site for tRNA. The Proton acceptor role is filled by histidine 22. TRNA is bound by residues phenylalanine 68, asparagine 70, and asparagine 116.

It belongs to the PTH family. As to quaternary structure, monomer.

The protein resides in the cytoplasm. It carries out the reaction an N-acyl-L-alpha-aminoacyl-tRNA + H2O = an N-acyl-L-amino acid + a tRNA + H(+). Its function is as follows. Hydrolyzes ribosome-free peptidyl-tRNAs (with 1 or more amino acids incorporated), which drop off the ribosome during protein synthesis, or as a result of ribosome stalling. Catalyzes the release of premature peptidyl moieties from peptidyl-tRNA molecules trapped in stalled 50S ribosomal subunits, and thus maintains levels of free tRNAs and 50S ribosomes. The sequence is that of Peptidyl-tRNA hydrolase from Shewanella halifaxensis (strain HAW-EB4).